A 283-amino-acid chain; its full sequence is Phosphatidylglycerol--prolipoprotein diacylglyceryl transferase (283 aa).

The next 4 helical transmembrane spans lie at 17 to 37 (LAVRWYALSYILGFILFTFLG), 56 to 76 (FLTWGILGVILGGRLGYVLFY), 92 to 112 (WEGGMSFHGGFLGVVIAIWLF), and 117 to 137 (GIGFLKLMDTVAPLVPLGLAS). Residue R139 coordinates a 1,2-diacyl-sn-glycero-3-phospho-(1'-sn-glycerol). The next 3 membrane-spanning stretches (helical) occupy residues 194–214 (PSQLYQFALEGICLFAVVWLF), 222–242 (GQVASLFLGGYGIFRFIAEFA), and 255–275 (GLSMGQWLSVPMIVLGIVGFV).

It belongs to the Lgt family.

It is found in the cell inner membrane. The enzyme catalyses L-cysteinyl-[prolipoprotein] + a 1,2-diacyl-sn-glycero-3-phospho-(1'-sn-glycerol) = an S-1,2-diacyl-sn-glyceryl-L-cysteinyl-[prolipoprotein] + sn-glycerol 1-phosphate + H(+). It participates in protein modification; lipoprotein biosynthesis (diacylglyceryl transfer). Catalyzes the transfer of the diacylglyceryl group from phosphatidylglycerol to the sulfhydryl group of the N-terminal cysteine of a prolipoprotein, the first step in the formation of mature lipoproteins. This chain is Phosphatidylglycerol--prolipoprotein diacylglyceryl transferase, found in Neisseria meningitidis serogroup C / serotype 2a (strain ATCC 700532 / DSM 15464 / FAM18).